Consider the following 283-residue polypeptide: Probable endonuclease 4 (283 aa).

Residues H69, H109, E145, D179, H182, H216, D229, H231, and E261 each contribute to the Zn(2+) site.

Belongs to the AP endonuclease 2 family. The cofactor is Zn(2+).

It carries out the reaction Endonucleolytic cleavage to 5'-phosphooligonucleotide end-products.. In terms of biological role, endonuclease IV plays a role in DNA repair. It cleaves phosphodiester bonds at apurinic or apyrimidinic (AP) sites, generating a 3'-hydroxyl group and a 5'-terminal sugar phosphate. In Campylobacter curvus (strain 525.92), this protein is Probable endonuclease 4.